We begin with the raw amino-acid sequence, 286 residues long: 4-hydroxy-tetrahydrodipicolinate synthase (286 aa).

Threonine 42 is a pyruvate binding site. The Proton donor/acceptor role is filled by tyrosine 129. Catalysis depends on lysine 157, which acts as the Schiff-base intermediate with substrate. Isoleucine 196 is a pyruvate binding site.

This sequence belongs to the DapA family. In terms of assembly, homotetramer; dimer of dimers.

The protein resides in the cytoplasm. It carries out the reaction L-aspartate 4-semialdehyde + pyruvate = (2S,4S)-4-hydroxy-2,3,4,5-tetrahydrodipicolinate + H2O + H(+). It functions in the pathway amino-acid biosynthesis; L-lysine biosynthesis via DAP pathway; (S)-tetrahydrodipicolinate from L-aspartate: step 3/4. Functionally, catalyzes the condensation of (S)-aspartate-beta-semialdehyde [(S)-ASA] and pyruvate to 4-hydroxy-tetrahydrodipicolinate (HTPA). The sequence is that of 4-hydroxy-tetrahydrodipicolinate synthase from Chlamydia trachomatis serovar A (strain ATCC VR-571B / DSM 19440 / HAR-13).